The chain runs to 227 residues: Cytochrome c oxidase subunit 2 (227 aa).

The Mitochondrial intermembrane segment spans residues Met1–Ser14. The helical transmembrane segment at Pro15 to Met45 threads the bilayer. Residues Leu46–Gln59 are Mitochondrial matrix-facing. A helical membrane pass occupies residues Ser60–Met87. The Mitochondrial intermembrane segment spans residues Asp88 to Ile227. Cu cation is bound by residues His161, Cys196, Glu198, Cys200, His204, and Met207. Glu198 serves as a coordination point for Mg(2+).

Belongs to the cytochrome c oxidase subunit 2 family. As to quaternary structure, component of the cytochrome c oxidase (complex IV, CIV), a multisubunit enzyme composed of 14 subunits. The complex is composed of a catalytic core of 3 subunits MT-CO1, MT-CO2 and MT-CO3, encoded in the mitochondrial DNA, and 11 supernumerary subunits COX4I, COX5A, COX5B, COX6A, COX6B, COX6C, COX7A, COX7B, COX7C, COX8 and NDUFA4, which are encoded in the nuclear genome. The complex exists as a monomer or a dimer and forms supercomplexes (SCs) in the inner mitochondrial membrane with NADH-ubiquinone oxidoreductase (complex I, CI) and ubiquinol-cytochrome c oxidoreductase (cytochrome b-c1 complex, complex III, CIII), resulting in different assemblies (supercomplex SCI(1)III(2)IV(1) and megacomplex MCI(2)III(2)IV(2)). Found in a complex with TMEM177, COA6, COX18, COX20, SCO1 and SCO2. Interacts with TMEM177 in a COX20-dependent manner. Interacts with COX20. Interacts with COX16. Cu cation is required as a cofactor.

Its subcellular location is the mitochondrion inner membrane. It catalyses the reaction 4 Fe(II)-[cytochrome c] + O2 + 8 H(+)(in) = 4 Fe(III)-[cytochrome c] + 2 H2O + 4 H(+)(out). In terms of biological role, component of the cytochrome c oxidase, the last enzyme in the mitochondrial electron transport chain which drives oxidative phosphorylation. The respiratory chain contains 3 multisubunit complexes succinate dehydrogenase (complex II, CII), ubiquinol-cytochrome c oxidoreductase (cytochrome b-c1 complex, complex III, CIII) and cytochrome c oxidase (complex IV, CIV), that cooperate to transfer electrons derived from NADH and succinate to molecular oxygen, creating an electrochemical gradient over the inner membrane that drives transmembrane transport and the ATP synthase. Cytochrome c oxidase is the component of the respiratory chain that catalyzes the reduction of oxygen to water. Electrons originating from reduced cytochrome c in the intermembrane space (IMS) are transferred via the dinuclear copper A center (CU(A)) of subunit 2 and heme A of subunit 1 to the active site in subunit 1, a binuclear center (BNC) formed by heme A3 and copper B (CU(B)). The BNC reduces molecular oxygen to 2 water molecules using 4 electrons from cytochrome c in the IMS and 4 protons from the mitochondrial matrix. In Acomys wilsoni (Wilson's spiny mouse), this protein is Cytochrome c oxidase subunit 2 (MT-CO2).